Consider the following 415-residue polypeptide: Gamma-glutamyl phosphate reductase (415 aa).

It belongs to the gamma-glutamyl phosphate reductase family.

It localises to the cytoplasm. It carries out the reaction L-glutamate 5-semialdehyde + phosphate + NADP(+) = L-glutamyl 5-phosphate + NADPH + H(+). The protein operates within amino-acid biosynthesis; L-proline biosynthesis; L-glutamate 5-semialdehyde from L-glutamate: step 2/2. Catalyzes the NADPH-dependent reduction of L-glutamate 5-phosphate into L-glutamate 5-semialdehyde and phosphate. The product spontaneously undergoes cyclization to form 1-pyrroline-5-carboxylate. The sequence is that of Gamma-glutamyl phosphate reductase from Thermotoga sp. (strain RQ2).